A 233-amino-acid chain; its full sequence is 7-cyano-7-deazaguanine synthase (233 aa).

7–17 (CSGGLDSVSLA) provides a ligand contact to ATP. Zn(2+)-binding residues include C185, C193, C196, and C199.

Belongs to the QueC family. Zn(2+) serves as cofactor.

It carries out the reaction 7-carboxy-7-deazaguanine + NH4(+) + ATP = 7-cyano-7-deazaguanine + ADP + phosphate + H2O + H(+). Its pathway is purine metabolism; 7-cyano-7-deazaguanine biosynthesis. Catalyzes the ATP-dependent conversion of 7-carboxy-7-deazaguanine (CDG) to 7-cyano-7-deazaguanine (preQ(0)). The sequence is that of 7-cyano-7-deazaguanine synthase from Paracoccus denitrificans (strain Pd 1222).